The sequence spans 180 residues: NADH-quinone oxidoreductase subunit I (180 aa).

4Fe-4S ferredoxin-type domains lie at 50–80 (LTRD…LQKA) and 90–119 (EFFR…LTPD). Positions 60, 63, 66, 70, 99, 102, 105, and 109 each coordinate [4Fe-4S] cluster.

This sequence belongs to the complex I 23 kDa subunit family. As to quaternary structure, NDH-1 is composed of 13 different subunits. Subunits NuoA, H, J, K, L, M, N constitute the membrane sector of the complex. Requires [4Fe-4S] cluster as cofactor.

Its subcellular location is the cell inner membrane. It carries out the reaction a quinone + NADH + 5 H(+)(in) = a quinol + NAD(+) + 4 H(+)(out). NDH-1 shuttles electrons from NADH, via FMN and iron-sulfur (Fe-S) centers, to quinones in the respiratory chain. The immediate electron acceptor for the enzyme in this species is believed to be ubiquinone. Couples the redox reaction to proton translocation (for every two electrons transferred, four hydrogen ions are translocated across the cytoplasmic membrane), and thus conserves the redox energy in a proton gradient. This is NADH-quinone oxidoreductase subunit I from Shigella sonnei (strain Ss046).